The sequence spans 430 residues: Asparagine--tRNA ligase (430 aa).

The protein belongs to the class-II aminoacyl-tRNA synthetase family. In terms of assembly, homodimer.

The protein localises to the cytoplasm. The catalysed reaction is tRNA(Asn) + L-asparagine + ATP = L-asparaginyl-tRNA(Asn) + AMP + diphosphate + H(+). The polypeptide is Asparagine--tRNA ligase (Staphylococcus aureus (strain JH1)).